A 123-amino-acid chain; its full sequence is Large ribosomal subunit protein bL17 (123 aa).

Belongs to the bacterial ribosomal protein bL17 family. In terms of assembly, part of the 50S ribosomal subunit. Contacts protein L32.

The sequence is that of Large ribosomal subunit protein bL17 from Staphylococcus haemolyticus (strain JCSC1435).